The following is a 721-amino-acid chain: Angiomotin-like 2a (721 aa).

The segment at 35–84 (QQALRGGSSGGGAGSPRSSLESLTQEESLSPQLSARQEPQGQEHQGDFQH) is disordered. The span at 49–68 (SPRSSLESLTQEESLSPQLS) shows a compositional bias: low complexity. Residue tyrosine 103 is modified to Phosphotyrosine; by FGFR1. A disordered region spans residues 169–214 (DNIPMSSSHSYPQLSNNHSDTVVNEQSVHQPDQRGPPPEYPFMVRS). The segment covering 172–198 (PMSSSHSYPQLSNNHSDTVVNEQSVHQ) has biased composition (polar residues). The stretch at 275-531 (ANNFQMEQLI…TRWEQKYLEE (257 aa)) forms a coiled coil. Residues 554 to 567 (INHSPRNSPNSSFN) show a composition bias toward polar residues. Disordered stretches follow at residues 554 to 575 (INHSPRNSPNSSFNEDLPSPNH) and 666 to 709 (DSST…TQIS). Positions 688–702 (SAPEPSTASSSESTS) are enriched in low complexity. The PDZ-binding motif lies at 718 to 721 (EILI).

This sequence belongs to the angiomotin family. In terms of assembly, interacts with SRC. In terms of processing, phosphorylation at Tyr-103 is necessary for efficient binding to SRC and synergistically functioning with SRC to activate the downstream MAPK pathway. In terms of tissue distribution, expressed in endothelial cells.

Its subcellular location is the recycling endosome. It localises to the cytoplasm. The protein resides in the cell projection. The protein localises to the podosome. It is found in the cell junction. Required for proper architecture of actin filaments and for cell movements during embryogenesis. Plays a role in the radial actin fiber architecture in skin epithelial cells, thereby maintains cell geometry, size and cell interconnectivity within the skin. Plays an important role in coupling actin fibers to cell junctions in endothelial cells and is therefore required for correct endothelial cell morphology and maintenance of dorsal aorta lumen expansion during embryogenesis. May further play a role in the polarity, proliferation and migration of endothelial cells, and therefore participates in angiogenesis. Inhibits the Wnt/beta-catenin signaling pathway, probably by recruiting CTNNB1 to recycling endosomes and hence preventing its translocation to the nucleus. Regulates the translocation of phosphorylated SRC to peripheral cell-matrix adhesion sites. Selectively promotes FGF-induced MAPK activation through SRC. In Danio rerio (Zebrafish), this protein is Angiomotin-like 2a (amotl2a).